The primary structure comprises 591 residues: L-fucose isomerase (591 aa).

Catalysis depends on proton acceptor residues Glu-337 and Asp-361. Mn(2+) is bound by residues Glu-337, Asp-361, and His-528.

The protein belongs to the L-fucose isomerase family. In terms of assembly, homohexamer. Mn(2+) serves as cofactor.

The protein resides in the cytoplasm. The catalysed reaction is L-fucose = L-fuculose. It participates in carbohydrate degradation; L-fucose degradation; L-lactaldehyde and glycerone phosphate from L-fucose: step 1/3. Functionally, converts the aldose L-fucose into the corresponding ketose L-fuculose. The chain is L-fucose isomerase from Salmonella paratyphi A (strain ATCC 9150 / SARB42).